The primary structure comprises 1271 residues: Breakpoint cluster region protein (1271 aa).

Met1 bears the N-acetylmethionine mark. The segment at Met1 to Ala426 is kinase. Residues Val28–Arg55 adopt a coiled-coil conformation. The interval Lys67 to Glu173 is disordered. Residues Ala87–Ala105 are compositionally biased toward low complexity. Ser122 bears the Phosphoserine mark. Residues Pro123–Ala138 show a composition bias toward low complexity. Position 139 is a phosphoserine (Ser139). Residue Tyr177 is modified to Phosphotyrosine; by HCK. The segment covering Glu185–Asp198 has biased composition (basic and acidic residues). 3 disordered regions span residues Glu185–Glu247, Gly286–His392, and Asn416–Ala476. Residues Ser197–Thr385 form a binding to ABL SH2-domain region. Residues Arg199–Met208 are compositionally biased toward polar residues. Residues Ser202, Ser215, Ser222, and Ser236 each carry the phosphoserine modification. The residue at position 246 (Tyr246) is a Phosphotyrosine; by FES. 2 stretches are compositionally biased toward low complexity: residues Ser346 to Ser356 and Ser369 to Ser382. A phosphoserine mark is found at Ser356, Ser377, and Ser382. Thr385 is subject to Phosphothreonine. Residues Asp441–Asp451 show a composition bias toward basic and acidic residues. Phosphoserine is present on residues Ser459 and Ser463. Arg471 is subject to Omega-N-methylarginine. Residues Ser473 and Ser488 each carry the phosphoserine modification. The DH domain maps to Met498–Glu691. A Phosphotyrosine modification is found at Tyr554. The residue at position 641 (Thr641) is a Phosphothreonine. Tyr644 carries the post-translational modification Phosphotyrosine. Phosphothreonine is present on Thr693. The PH domain maps to Gln708–Lys866. Residues His893–Ile1020 form the C2 domain. Phosphoserine is present on Ser894. Positions Val1054–Tyr1248 constitute a Rho-GAP domain. Phosphoserine is present on Ser1264.

Homotetramer. Interacts with PDZK1. May interact with CCPG1. Interacts with FES/FPS, ABL1, PIK3R1 and GRB2. Interacts with HCK. Interacts with SH2D5. Interacts with DLG4. Post-translationally, autophosphorylated. Phosphorylated by FES/FPS on tyrosine residues, leading to down-regulation of the BCR kinase activity. Phosphorylation at Tyr-177 by HCK is important for interaction with GRB2.

The protein resides in the postsynaptic density. Its subcellular location is the cell projection. It is found in the dendritic spine. It localises to the axon. The protein localises to the synapse. The enzyme catalyses L-seryl-[protein] + ATP = O-phospho-L-seryl-[protein] + ADP + H(+). It catalyses the reaction L-threonyl-[protein] + ATP = O-phospho-L-threonyl-[protein] + ADP + H(+). Functionally, protein with a unique structure having two opposing regulatory activities toward small GTP-binding proteins. The C-terminus is a GTPase-activating protein (GAP) domain which stimulates GTP hydrolysis by RAC1, RAC2 and CDC42. Accelerates the intrinsic rate of GTP hydrolysis of RAC1 or CDC42, leading to down-regulation of the active GTP-bound form. The central Dbl homology (DH) domain functions as guanine nucleotide exchange factor (GEF) that modulates the GTPases CDC42, RHOA and RAC1. Promotes the conversion of CDC42, RHOA and RAC1 from the GDP-bound to the GTP-bound form. The amino terminus contains an intrinsic kinase activity. Functions as an important negative regulator of neuronal RAC1 activity. Regulates macrophage functions such as CSF1-directed motility and phagocytosis through the modulation of RAC1 activity. Plays a major role as a RHOA GEF in keratinocytes being involved in focal adhesion formation and keratinocyte differentiation. The protein is Breakpoint cluster region protein of Homo sapiens (Human).